A 600-amino-acid chain; its full sequence is FERM domain-containing protein 3 (600 aa).

The FERM domain maps to 31 to 311; that stretch reads MRCTIRLLDD…ENQAFYKYAK (281 aa). The tract at residues 413 to 440 is disordered; the sequence is SAPVLGNSPARGLETTADVTHDEEESIR. The chain crosses the membrane as a helical span at residues 534-554; that stretch reads LLLAAIGLLMVVLPLLLILLE.

The protein localises to the membrane. This Xenopus tropicalis (Western clawed frog) protein is FERM domain-containing protein 3 (frmd3).